Reading from the N-terminus, the 148-residue chain is UPF0756 membrane protein NMA2160 (148 aa).

Transmembrane regions (helical) follow at residues Leu13–Met35, His50–Gly70, Phe80–Gly100, and Val121–Leu141.

It belongs to the UPF0756 family.

The protein localises to the cell membrane. The chain is UPF0756 membrane protein NMA2160 from Neisseria meningitidis serogroup A / serotype 4A (strain DSM 15465 / Z2491).